We begin with the raw amino-acid sequence, 185 residues long: Elongation factor P (185 aa).

This sequence belongs to the elongation factor P family.

The protein resides in the cytoplasm. The protein operates within protein biosynthesis; polypeptide chain elongation. In terms of biological role, involved in peptide bond synthesis. Stimulates efficient translation and peptide-bond synthesis on native or reconstituted 70S ribosomes in vitro. Probably functions indirectly by altering the affinity of the ribosome for aminoacyl-tRNA, thus increasing their reactivity as acceptors for peptidyl transferase. This chain is Elongation factor P, found in Lactococcus lactis subsp. cremoris (strain MG1363).